The sequence spans 545 residues: DNA-binding protein REPIN1 (545 aa).

A disordered region spans residues 1-50 (MLEQRCRGPTAMGPAQPWLFSGPSQESSQPDRGLRYQGKSAQPRGQTPGK). Phosphoserine is present on serine 27. Lysine 39 bears the N6-acetyllysine mark. The C2H2-type 1; atypical zinc finger occupies 52–74 (HRCAHCRKRFPGWVALWLHARRC). 2 C2H2-type zinc fingers span residues 80-102 (LPCH…LQVH) and 111-133 (FICH…LRAH). Residues 140–162 (ITCPECDRRFWRQKQLRAHLRRC) form a C2H2-type 4; atypical zinc finger. C2H2-type zinc fingers lie at residues 172–194 (FICG…KRVH), 229–251 (FQCA…RRVH), 257–279 (HQCP…RRIH), 285–307 (YPCT…SKIH), 353–375 (HSCS…QRQH), 381–403 (FACT…SRVH), 409–431 (FACE…RRDH), 437–459 (FVCP…RRIH), 465–487 (YVCP…RRIH), 493–515 (YACP…RKSH), and 521–543 (FCCA…QKKH). At lysine 269 the chain carries N6-acetyllysine.

Homodimers and homomultimers. Found in a complex with RIP60 and RIP100.

It is found in the nucleus. It localises to the cytoplasm. The protein localises to the cytosol. Functionally, sequence-specific double-stranded DNA-binding protein. Binds ATT-rich and T-rich DNA sequences and facilitates DNA bending. May regulate the expression of genes involved in cellular fatty acid import, including SCARB1/CD36, and genes involved in lipid droplet formation. May regulate the expression of LCN2, and thereby influence iron metabolism and apoptosis-related pathways. May regulate the expression of genes involved in glucose transport. The protein is DNA-binding protein REPIN1 (Repin1) of Mus musculus (Mouse).